The sequence spans 105 residues: ESAT-6-like protein EsxB (105 aa).

A disordered region spans residues 1–23; it reads MSQGFKTEADVMRNTAHRVDDTN. Over residues 7-21 the composition is skewed to basic and acidic residues; sequence TEADVMRNTAHRVDD.

This sequence belongs to the WXG100 family. CFP-10 subfamily. Forms a tight 1:1 complex with EsxB.

This Corynebacterium diphtheriae (strain ATCC 700971 / NCTC 13129 / Biotype gravis) protein is ESAT-6-like protein EsxB.